The primary structure comprises 329 residues: uncharacterized protein (329 aa).

Coiled coils occupy residues 57 to 119 (KKEE…LQEV) and 224 to 250 (AQRQ…LGNV).

This is an uncharacterized protein from Macaca fascicularis (Crab-eating macaque).